A 95-amino-acid chain; its full sequence is Aspartyl/glutamyl-tRNA(Asn/Gln) amidotransferase subunit C (95 aa).

It belongs to the GatC family. Heterotrimer of A, B and C subunits.

The enzyme catalyses L-glutamyl-tRNA(Gln) + L-glutamine + ATP + H2O = L-glutaminyl-tRNA(Gln) + L-glutamate + ADP + phosphate + H(+). It carries out the reaction L-aspartyl-tRNA(Asn) + L-glutamine + ATP + H2O = L-asparaginyl-tRNA(Asn) + L-glutamate + ADP + phosphate + 2 H(+). Functionally, allows the formation of correctly charged Asn-tRNA(Asn) or Gln-tRNA(Gln) through the transamidation of misacylated Asp-tRNA(Asn) or Glu-tRNA(Gln) in organisms which lack either or both of asparaginyl-tRNA or glutaminyl-tRNA synthetases. The reaction takes place in the presence of glutamine and ATP through an activated phospho-Asp-tRNA(Asn) or phospho-Glu-tRNA(Gln). This chain is Aspartyl/glutamyl-tRNA(Asn/Gln) amidotransferase subunit C, found in Dechloromonas aromatica (strain RCB).